We begin with the raw amino-acid sequence, 121 residues long: MAQRVTFRRRNPYNTRSNKIKVVKTPGGILRAQHVKKLATRPKCGDCGSALQGISTLRPRQYATVSKTHKTVSRAYGGSRCANCVKERIIRAFLIEEQKIVKKVVKEQTEAAKKSEKKAKK.

This sequence belongs to the eukaryotic ribosomal protein eL34 family. As to quaternary structure, component of the large ribosomal subunit (LSU). Mature yeast ribosomes consist of a small (40S) and a large (60S) subunit. The 40S small subunit contains 1 molecule of ribosomal RNA (18S rRNA) and 33 different proteins (encoded by 57 genes). The large 60S subunit contains 3 rRNA molecules (25S, 5.8S and 5S rRNA) and 46 different proteins (encoded by 81 genes).

It is found in the cytoplasm. Component of the ribosome, a large ribonucleoprotein complex responsible for the synthesis of proteins in the cell. The small ribosomal subunit (SSU) binds messenger RNAs (mRNAs) and translates the encoded message by selecting cognate aminoacyl-transfer RNA (tRNA) molecules. The large subunit (LSU) contains the ribosomal catalytic site termed the peptidyl transferase center (PTC), which catalyzes the formation of peptide bonds, thereby polymerizing the amino acids delivered by tRNAs into a polypeptide chain. The nascent polypeptides leave the ribosome through a tunnel in the LSU and interact with protein factors that function in enzymatic processing, targeting, and the membrane insertion of nascent chains at the exit of the ribosomal tunnel. This is Large ribosomal subunit protein eL34A from Saccharomyces cerevisiae (strain ATCC 204508 / S288c) (Baker's yeast).